The primary structure comprises 59 residues: Large ribosomal subunit protein uL30 (59 aa).

Belongs to the universal ribosomal protein uL30 family. Part of the 50S ribosomal subunit.

The polypeptide is Large ribosomal subunit protein uL30 (Enterococcus faecalis (strain ATCC 700802 / V583)).